We begin with the raw amino-acid sequence, 32 residues long: Protamine-1 (32 aa).

The disordered stretch occupies residues 1-32 (PRRRRASSGRPVRRRRRPKMSRRRRRGGRRRR).

As to expression, testis.

The protein localises to the nucleus. It is found in the chromosome. In terms of biological role, protamines substitute for histones in the chromatin of sperm during the haploid phase of spermatogenesis. They compact sperm DNA into a highly condensed, stable and inactive complex. In Esox lucius (Northern pike), this protein is Protamine-1.